The following is a 182-amino-acid chain: Adenine phosphoribosyltransferase (182 aa).

Belongs to the purine/pyrimidine phosphoribosyltransferase family. In terms of assembly, homodimer.

It is found in the cytoplasm. It carries out the reaction AMP + diphosphate = 5-phospho-alpha-D-ribose 1-diphosphate + adenine. It functions in the pathway purine metabolism; AMP biosynthesis via salvage pathway; AMP from adenine: step 1/1. Its function is as follows. Catalyzes a salvage reaction resulting in the formation of AMP, that is energically less costly than de novo synthesis. The chain is Adenine phosphoribosyltransferase from Pseudomonas aeruginosa (strain LESB58).